The chain runs to 187 residues: Threonylcarbamoyl-AMP synthase (187 aa).

One can recognise a YrdC-like domain in the interval 3-187 (NSELLKIIWA…LLNGYLYRKR (185 aa)).

Belongs to the SUA5 family. TsaC subfamily.

The protein localises to the cytoplasm. The enzyme catalyses L-threonine + hydrogencarbonate + ATP = L-threonylcarbamoyladenylate + diphosphate + H2O. In terms of biological role, required for the formation of a threonylcarbamoyl group on adenosine at position 37 (t(6)A37) in tRNAs that read codons beginning with adenine. Catalyzes the conversion of L-threonine, HCO(3)(-)/CO(2) and ATP to give threonylcarbamoyl-AMP (TC-AMP) as the acyladenylate intermediate, with the release of diphosphate. This Riesia pediculicola (strain USDA) protein is Threonylcarbamoyl-AMP synthase.